The sequence spans 323 residues: Prenyl transferase (323 aa).

Residues Lys-46, Arg-49, and His-81 each contribute to the isopentenyl diphosphate site. Residues Asp-88 and Asp-92 each contribute to the Mg(2+) site. An an all-trans-polyprenyl diphosphate-binding site is contributed by Arg-97. Arg-98 contacts isopentenyl diphosphate. Residues Lys-174, Thr-175, and Gln-212 each coordinate an all-trans-polyprenyl diphosphate.

Belongs to the FPP/GGPP synthase family. It depends on Mg(2+) as a cofactor.

It localises to the plastid. Its subcellular location is the chloroplast. Functionally, possible role in synthesis of the nonaprenyl side chain of plastoquinone or in synthesis of other prenyl chains such as undekaprenyl pyrophosphate. This is Prenyl transferase (preA) from Porphyra purpurea (Red seaweed).